A 348-amino-acid polypeptide reads, in one-letter code: Rhodopsin (348 aa).

Methionine 1 carries the N-acetylmethionine modification. Residues 1–36 lie on the Extracellular side of the membrane; it reads MNGTEGPNFYVPFSNKTGVVRSPFEYPQYYLAEPWQ. Asparagine 2 and asparagine 15 each carry an N-linked (GlcNAc...) asparagine glycan. The helical transmembrane segment at 37-61 threads the bilayer; it reads FSMLAAYMFLLIVLGFPINFLTLYV. Topologically, residues 62 to 73 are cytoplasmic; that stretch reads TVQHKKLRTPLN. The helical transmembrane segment at 74–96 threads the bilayer; the sequence is YILLNLAVADLFMVFGGFTTTLY. The Extracellular portion of the chain corresponds to 97–110; sequence TSLHGYFVFGPTGC. A disulfide bridge connects residues cysteine 110 and cysteine 187. A helical transmembrane segment spans residues 111–133; that stretch reads NVEGFFATLGGEIALWSLVVLAI. A 'Ionic lock' involved in activated form stabilization motif is present at residues 134 to 136; the sequence is ERY. Over 134-152 the chain is Cytoplasmic; that stretch reads ERYVVVCKPMSNFRFGENH. A helical membrane pass occupies residues 153–173; the sequence is AIMGVAFTWVMALACAAPPLA. Residues 174–202 are Extracellular-facing; the sequence is GWSRYIPEGMQCSCGIDYYTLKPEINNES. Glutamate 201 provides a ligand contact to Zn(2+). A helical transmembrane segment spans residues 203–224; sequence FVIYMFVVHFAIPMIVIFFCYG. Residues 225–252 are Cytoplasmic-facing; sequence QLVFTVKEAAAQQQESATTQKAEKEVTR. Residues 253 to 274 traverse the membrane as a helical segment; that stretch reads MVIIMVIAFLICWVPYASVAFY. The Extracellular segment spans residues 275–286; it reads IFTHQGSDFGPI. Glutamine 279 provides a ligand contact to Zn(2+). A helical transmembrane segment spans residues 287-308; the sequence is FMTLPAFFAKSSSIYNPVIYIM. At lysine 296 the chain carries N6-(retinylidene)lysine. At 309 to 348 the chain is on the cytoplasmic side; the sequence is MNKQFRNCMITTLCCGKNPLGDDEASASASKTETSQVAPA. S-palmitoyl cysteine attachment occurs at residues cysteine 322 and cysteine 323. Residues 330–348 are interaction with SAG; the sequence is DDEASASASKTETSQVAPA. Serine 334 and serine 338 each carry phosphoserine. 2 positions are modified to phosphothreonine: threonine 340 and threonine 342. At serine 343 the chain carries Phosphoserine.

This sequence belongs to the G-protein coupled receptor 1 family. Opsin subfamily. Homodimer. May form a complex composed of RHO, GRK1 and RCVRN in a Ca(2+)-dependent manner; RCVRN prevents the interaction between GRK1 and RHO. Interacts with GRK1. Interacts (phosphorylated form) with SAG. Interacts with GNAT1. Interacts with GNAT3. SAG and G-proteins compete for a common binding site. Interacts with PRCD; the interaction promotes PRCD stability. Forms a complex with ASAP1 and ARF4. Forms a complex with ASAP1, RAB11A, Rabin8/RAB3IP, ARF4 and RAB11FIP3; the complex regulates Golgi-to-cilia rhodopsin/RHO transport in photoreceptors. In terms of processing, phosphorylated on some or all of the serine and threonine residues present in the C-terminal region. Post-translationally, contains one covalently linked retinal chromophore. Upon light absorption, the covalently bound 11-cis-retinal is converted to all-trans-retinal. After hydrolysis of the Schiff base and release of the covalently bound all-trans-retinal, active rhodopsin is regenerated by binding of a fresh molecule of 11-cis-retinal.

Its subcellular location is the membrane. It is found in the cell projection. The protein resides in the cilium. The protein localises to the photoreceptor outer segment. In terms of biological role, photoreceptor required for image-forming vision at low light intensity. Required for photoreceptor cell viability after birth. Light-induced isomerization of 11-cis to all-trans retinal triggers a conformational change that activates signaling via G-proteins. Subsequent receptor phosphorylation mediates displacement of the bound G-protein alpha subunit by the arrestin SAG and terminates signaling. This is Rhodopsin (RHO) from Canis lupus familiaris (Dog).